Here is a 158-residue protein sequence, read N- to C-terminus: 3-hydroxyacyl-[acyl-carrier-protein] dehydratase FabZ (158 aa).

Histidine 57 is a catalytic residue.

This sequence belongs to the thioester dehydratase family. FabZ subfamily.

The protein localises to the cytoplasm. It carries out the reaction a (3R)-hydroxyacyl-[ACP] = a (2E)-enoyl-[ACP] + H2O. Functionally, involved in unsaturated fatty acids biosynthesis. Catalyzes the dehydration of short chain beta-hydroxyacyl-ACPs and long chain saturated and unsaturated beta-hydroxyacyl-ACPs. This chain is 3-hydroxyacyl-[acyl-carrier-protein] dehydratase FabZ, found in Helicobacter acinonychis (strain Sheeba).